Here is a 1018-residue protein sequence, read N- to C-terminus: Fibronectin-binding protein A (1018 aa).

The signal sequence occupies residues Met-1–Ala-36. Positions Tyr-7–Ser-18 match the YSIRK-G/S signaling motif motif. Residues Ala-37–Asn-511 are ligand-binding A region. Disordered stretches follow at residues Ser-38 to Gln-61 and Ala-78 to Thr-195. 2 stretches are compositionally biased toward polar residues: residues Glu-39–Gln-61 and Ala-78–Thr-92. Over residues Thr-112 to Val-126 the composition is skewed to basic and acidic residues. The segment covering Thr-129–Gln-139 has biased composition (polar residues). Residues Gly-194–Asn-511 are fibrinogen/elastin/tropoelastin-binding. The tract at residues Gly-512–Thr-872 is fibronectin-binding. One copy of the B-1 repeat lies at Glu-545 to Ile-574. A 2 X approximate tandem repeats region spans residues Glu-545 to Ser-604. The B-2 repeat unit spans residues Glu-575 to Ser-604. 3 disordered regions span residues Gly-595–His-622, Leu-740–Phe-813, and Glu-827–Phe-997. The stretch at Gly-745–His-782 is one D-1 repeat. The tract at residues Gly-745–Pro-878 is 4 X approximate tandem repeats, D-3 repeat has more fibronectin-binding activity. A D-2 repeat occupies Gly-783–His-820. The D-3 repeat unit spans residues Gly-821–Ser-859. The span at Glu-827–Pro-838 shows a compositional bias: basic and acidic residues. One copy of the D-4; truncated repeat lies at Gly-860–Pro-878. Pro residues predominate over residues Pro-875–Pro-938. WR repeat units lie at residues Pro-879–Thr-892, Pro-893–Thr-906, Pro-907–Thr-920, Pro-921–Lys-934, and Pro-935–Lys-948. The interval Pro-879–Lys-948 is 5 X tandem repeats, Pro-rich (WR). Residues Leu-982–Gly-986 carry the LPXTG sorting signal motif. A Pentaglycyl murein peptidoglycan amidated threonine modification is found at Thr-985. Residues Gly-986–Ala-1018 constitute a propeptide, removed by sortase.

The protein localises to the secreted. Its subcellular location is the cell wall. Functionally, possesses multiple, substituting fibronectin (Fn) binding regions, each capable of conferring adherence to both soluble and immobilized forms of Fn. This confers to S.aureus the ability to invade endothelial cells both in vivo and in vitro, without requiring additional factors, although in a slow and inefficient way through actin rearrangements in host cells. This invasion process is mediated by integrin alpha-5/beta-1. Promotes bacterial attachment to both soluble and immobilized forms of fibrinogen (Fg) by means of a unique binding site localized within the 17 C-terminal residues of the gamma-chain of human Fg. Both plasma proteins (Fn and Fg) function as a bridge between bacterium and host cell. Promotes attachment to immobilized elastin peptides in a dose-dependent and saturable manner. Promotes attachment to both full-length and segments of immobilized human tropoelastin at multiple sites in a dose and pH-dependent manner. Promotes adherence to and aggregation of activated platelets independently of other S.aureus surface molecules. Is a critical mediator implicated in the induction of experimental endocarditis in rats with catheter-induced aortic vegetations, promoting both colonization and persistence of the bacterium into the host. The protein is Fibronectin-binding protein A (fnbA) of Staphylococcus aureus (strain NCTC 8325 / PS 47).